The chain runs to 486 residues: UDP-N-acetylmuramate--L-alanine ligase (486 aa).

126 to 132 (GTHGKTT) provides a ligand contact to ATP.

The protein belongs to the MurCDEF family.

The protein resides in the cytoplasm. It catalyses the reaction UDP-N-acetyl-alpha-D-muramate + L-alanine + ATP = UDP-N-acetyl-alpha-D-muramoyl-L-alanine + ADP + phosphate + H(+). Its pathway is cell wall biogenesis; peptidoglycan biosynthesis. Its function is as follows. Cell wall formation. This chain is UDP-N-acetylmuramate--L-alanine ligase, found in Pectobacterium atrosepticum (strain SCRI 1043 / ATCC BAA-672) (Erwinia carotovora subsp. atroseptica).